The chain runs to 380 residues: Queuine tRNA-ribosyltransferase (380 aa).

Asp-95 acts as the Proton acceptor in catalysis. Residues Asp-95–Phe-99, Asp-149, Gln-192, and Gly-219 contribute to the substrate site. Residues Gly-250–Ala-256 form an RNA binding region. The active-site Nucleophile is Asp-269. The RNA binding; important for wobble base 34 recognition stretch occupies residues Thr-274–Arg-278. Residues Cys-307, Cys-309, Cys-312, and His-338 each coordinate Zn(2+).

The protein belongs to the queuine tRNA-ribosyltransferase family. As to quaternary structure, homodimer. Within each dimer, one monomer is responsible for RNA recognition and catalysis, while the other monomer binds to the replacement base PreQ1. Requires Zn(2+) as cofactor.

It carries out the reaction 7-aminomethyl-7-carbaguanine + guanosine(34) in tRNA = 7-aminomethyl-7-carbaguanosine(34) in tRNA + guanine. The protein operates within tRNA modification; tRNA-queuosine biosynthesis. Its function is as follows. Catalyzes the base-exchange of a guanine (G) residue with the queuine precursor 7-aminomethyl-7-deazaguanine (PreQ1) at position 34 (anticodon wobble position) in tRNAs with GU(N) anticodons (tRNA-Asp, -Asn, -His and -Tyr). Catalysis occurs through a double-displacement mechanism. The nucleophile active site attacks the C1' of nucleotide 34 to detach the guanine base from the RNA, forming a covalent enzyme-RNA intermediate. The proton acceptor active site deprotonates the incoming PreQ1, allowing a nucleophilic attack on the C1' of the ribose to form the product. After dissociation, two additional enzymatic reactions on the tRNA convert PreQ1 to queuine (Q), resulting in the hypermodified nucleoside queuosine (7-(((4,5-cis-dihydroxy-2-cyclopenten-1-yl)amino)methyl)-7-deazaguanosine). The chain is Queuine tRNA-ribosyltransferase from Pediococcus pentosaceus (strain ATCC 25745 / CCUG 21536 / LMG 10740 / 183-1w).